Here is a 430-residue protein sequence, read N- to C-terminus: Protein translocase subunit SecY (430 aa).

10 consecutive transmembrane segments (helical) span residues 18-38 (IFFT…PAPG), 68-88 (FSIF…MQLL), 117-137 (FAII…NNYL), 147-167 (VMSY…LIWL), 174-194 (FGVG…TLPS), 217-237 (ILGL…VLEA), 270-290 (VIPV…TLFF), 308-328 (NIGM…YAFV), 368-388 (FVGS…TKFM), and 389-409 (GLPQ…GVAI).

Belongs to the SecY/SEC61-alpha family. As to quaternary structure, component of the Sec protein translocase complex. Heterotrimer consisting of SecY, SecE and SecG subunits. The heterotrimers can form oligomers, although 1 heterotrimer is thought to be able to translocate proteins. Interacts with the ribosome. Interacts with SecDF, and other proteins may be involved. Interacts with SecA.

The protein localises to the cell membrane. The central subunit of the protein translocation channel SecYEG. Consists of two halves formed by TMs 1-5 and 6-10. These two domains form a lateral gate at the front which open onto the bilayer between TMs 2 and 7, and are clamped together by SecE at the back. The channel is closed by both a pore ring composed of hydrophobic SecY resides and a short helix (helix 2A) on the extracellular side of the membrane which forms a plug. The plug probably moves laterally to allow the channel to open. The ring and the pore may move independently. In Staphylococcus epidermidis (strain ATCC 35984 / DSM 28319 / BCRC 17069 / CCUG 31568 / BM 3577 / RP62A), this protein is Protein translocase subunit SecY.